The sequence spans 398 residues: Ornithine aminotransferase (398 aa).

N6-(pyridoxal phosphate)lysine is present on Lys256.

This sequence belongs to the class-III pyridoxal-phosphate-dependent aminotransferase family. OAT subfamily. Requires pyridoxal 5'-phosphate as cofactor.

The protein resides in the cytoplasm. It carries out the reaction a 2-oxocarboxylate + L-ornithine = L-glutamate 5-semialdehyde + an L-alpha-amino acid. Its pathway is amino-acid biosynthesis; L-proline biosynthesis; L-glutamate 5-semialdehyde from L-ornithine: step 1/1. Functionally, catalyzes the interconversion of ornithine to glutamate semialdehyde. The chain is Ornithine aminotransferase from Halalkalibacterium halodurans (strain ATCC BAA-125 / DSM 18197 / FERM 7344 / JCM 9153 / C-125) (Bacillus halodurans).